The chain runs to 80 residues: Exodeoxyribonuclease 7 small subunit (80 aa).

This sequence belongs to the XseB family. In terms of assembly, heterooligomer composed of large and small subunits.

It localises to the cytoplasm. It catalyses the reaction Exonucleolytic cleavage in either 5'- to 3'- or 3'- to 5'-direction to yield nucleoside 5'-phosphates.. In terms of biological role, bidirectionally degrades single-stranded DNA into large acid-insoluble oligonucleotides, which are then degraded further into small acid-soluble oligonucleotides. The chain is Exodeoxyribonuclease 7 small subunit from Klebsiella pneumoniae (strain 342).